We begin with the raw amino-acid sequence, 181 residues long: Translation initiation factor IF-3, chloroplastic (181 aa).

This sequence belongs to the IF-3 family. Monomer.

The protein resides in the plastid. The protein localises to the chloroplast. IF-3 binds to the 30S ribosomal subunit and shifts the equilibrium between 70S ribosomes and their 50S and 30S subunits in favor of the free subunits, thus enhancing the availability of 30S subunits on which protein synthesis initiation begins. The protein is Translation initiation factor IF-3, chloroplastic of Galdieria sulphuraria (Red alga).